Reading from the N-terminus, the 122-residue chain is Large ribosomal subunit protein uL14 (122 aa).

Belongs to the universal ribosomal protein uL14 family. In terms of assembly, part of the 50S ribosomal subunit. Forms a cluster with proteins L3 and L19. In the 70S ribosome, L14 and L19 interact and together make contacts with the 16S rRNA in bridges B5 and B8.

Functionally, binds to 23S rRNA. Forms part of two intersubunit bridges in the 70S ribosome. In Helicobacter acinonychis (strain Sheeba), this protein is Large ribosomal subunit protein uL14.